Consider the following 1040-residue polypeptide: Multidrug resistance protein MdtB (1040 aa).

The next 12 helical transmembrane spans lie at 25–45, 342–362, 369–389, 396–416, 440–460, 472–492, 537–557, 863–883, 888–908, 911–931, 967–987, and 998–1018; these read LLMV…PVAA, DTQF…YLFL, IIPG…MVFL, LTLM…IVVI, IGFT…PLLF, FAVT…TLTP, WLTL…WVFI, LGST…VLGV, FIHP…ALLA, IAGS…IGIV, PILM…LSTG, and IGMV…TPVI.

The protein belongs to the resistance-nodulation-cell division (RND) (TC 2.A.6) family. MdtB subfamily. Part of a tripartite efflux system composed of MdtA, MdtB and MdtC. MdtB forms a heteromultimer with MdtC.

The protein resides in the cell inner membrane. In Citrobacter koseri (strain ATCC BAA-895 / CDC 4225-83 / SGSC4696), this protein is Multidrug resistance protein MdtB.